Consider the following 211-residue polypeptide: Large ribosomal subunit protein uL3 (211 aa).

Positions 130–154 are disordered; it reads RGPMAHGSKFHRHQGSNGSATTPGR.

The protein belongs to the universal ribosomal protein uL3 family. As to quaternary structure, part of the 50S ribosomal subunit. Forms a cluster with proteins L14 and L19.

Its function is as follows. One of the primary rRNA binding proteins, it binds directly near the 3'-end of the 23S rRNA, where it nucleates assembly of the 50S subunit. This Lachnospira eligens (strain ATCC 27750 / DSM 3376 / VPI C15-48 / C15-B4) (Eubacterium eligens) protein is Large ribosomal subunit protein uL3.